A 556-amino-acid polypeptide reads, in one-letter code: Urocanate hydratase (556 aa).

NAD(+)-binding positions include 52-53 (GG), Gln130, 176-178 (GMG), Glu196, Arg201, 242-243 (NA), 263-267 (QTSAH), 273-274 (YL), and Tyr322. Residue Cys410 is part of the active site. An NAD(+)-binding site is contributed by Gly492.

It belongs to the urocanase family. It depends on NAD(+) as a cofactor.

The protein resides in the cytoplasm. It carries out the reaction 4-imidazolone-5-propanoate = trans-urocanate + H2O. It participates in amino-acid degradation; L-histidine degradation into L-glutamate; N-formimidoyl-L-glutamate from L-histidine: step 2/3. Functionally, catalyzes the conversion of urocanate to 4-imidazolone-5-propionate. The polypeptide is Urocanate hydratase (Shewanella sp. (strain ANA-3)).